The chain runs to 851 residues: DNA mismatch repair protein MutS (851 aa).

602-609 (GPNMSGKS) contributes to the ATP binding site.

This sequence belongs to the DNA mismatch repair MutS family.

In terms of biological role, this protein is involved in the repair of mismatches in DNA. It is possible that it carries out the mismatch recognition step. This protein has a weak ATPase activity. This Streptococcus pyogenes serotype M3 (strain SSI-1) protein is DNA mismatch repair protein MutS.